Reading from the N-terminus, the 101-residue chain is MQLTALLALATLAIAAPAEPSEVAPRNVLTGPCSSGVTNSNPQCCGAGILGILYFDCETPDEVSSPINPLKTICAAEGLQAKCCTLGIAGLGVLCTDALPE.

The first 15 residues, 1–15 (MQLTALLALATLAIA), serve as a signal peptide directing secretion. 4 cysteine pairs are disulfide-bonded: cysteine 33–cysteine 83, cysteine 44–cysteine 74, cysteine 45–cysteine 57, and cysteine 84–cysteine 95.

The protein belongs to the cerato-ulmin hydrophobin family. Homodimer. Homodimers further self-assemble to form highly ordered films at water-air interfaces through intermolecular interactions.

Its subcellular location is the secreted. The protein resides in the cell wall. Functionally, aerial growth, conidiation, and dispersal of filamentous fungi in the environment rely upon a capability of their secreting small amphipathic proteins called hydrophobins (HPBs) with low sequence identity. Class I can self-assemble into an outermost layer of rodlet bundles on aerial cell surfaces, conferring cellular hydrophobicity that supports fungal growth, development and dispersal; whereas Class II form highly ordered films at water-air interfaces through intermolecular interactions but contribute nothing to the rodlet structure. The protein is Class II hydrophobin 5 of Trichoderma asperellum (strain ATCC 204424 / CBS 433.97 / NBRC 101777).